The primary structure comprises 603 residues: UvrABC system protein C (603 aa).

The GIY-YIG domain maps to 15–92 (DQPGCYLMKD…IKKHDPRFNI (78 aa)). The region spanning 197 to 232 (KTVKNDLMKKMQEAAENMEFEKAGEFRDQINAIETT) is the UVR domain.

This sequence belongs to the UvrC family. In terms of assembly, interacts with UvrB in an incision complex.

The protein resides in the cytoplasm. The UvrABC repair system catalyzes the recognition and processing of DNA lesions. UvrC both incises the 5' and 3' sides of the lesion. The N-terminal half is responsible for the 3' incision and the C-terminal half is responsible for the 5' incision. The protein is UvrABC system protein C of Listeria monocytogenes serotype 4b (strain CLIP80459).